The primary structure comprises 266 residues: Diphthine synthase (266 aa).

S-adenosyl-L-methionine contacts are provided by residues Leu-9, Asp-84, Val-87, 112–113 (SI), Leu-169, Ala-210, and His-235.

Belongs to the diphthine synthase family. In terms of assembly, homodimer.

The enzyme catalyses 2-[(3S)-amino-3-carboxypropyl]-L-histidyl-[translation elongation factor 2] + 3 S-adenosyl-L-methionine = diphthine-[translation elongation factor 2] + 3 S-adenosyl-L-homocysteine + 3 H(+). Its pathway is protein modification; peptidyl-diphthamide biosynthesis. S-adenosyl-L-methionine-dependent methyltransferase that catalyzes the trimethylation of the amino group of the modified target histidine residue in translation elongation factor 2 (EF-2), to form an intermediate called diphthine. The three successive methylation reactions represent the second step of diphthamide biosynthesis. This is Diphthine synthase from Methanosarcina acetivorans (strain ATCC 35395 / DSM 2834 / JCM 12185 / C2A).